A 66-amino-acid polypeptide reads, in one-letter code: U1-theraphotoxin-Cg1d 1 (66 aa).

Positions 1–21 are cleaved as a signal peptide; that stretch reads MKMSALFVIFGLALLFCNSFA. A propeptide spanning residues 22–29 is cleaved from the precursor; it reads AELKATGR. 3 cysteine pairs are disulfide-bonded: C31–C46, C38–C51, and C45–C58. Position 63 is a proline amide (P63).

Belongs to the neurotoxin 10 (Hwtx-1) family. 46 (Jztx-7/10/12) subfamily. As to expression, expressed by the venom gland.

It is found in the secreted. Its function is as follows. Probable ion channel inhibitor. The chain is U1-theraphotoxin-Cg1d 1 from Chilobrachys guangxiensis (Chinese earth tiger tarantula).